We begin with the raw amino-acid sequence, 232 residues long: T-cell surface glycoprotein CD1b-3 (232 aa).

Over 1-201 the chain is Extracellular; it reads GLQEFQFEYP…LYWGHPMYIG (201 aa). Intrachain disulfides connect C19–C83, C48–C62, and C123–C178. A glycan (N-linked (GlcNAc...) asparagine) is linked at N45. The Ig-like domain maps to 84 to 194; that stretch reads PRYLLGVLDA…LGDQDIILYW (111 aa). The chain crosses the membrane as a helical span at residues 202–222; sequence LIFVAIIVPSLILLICLALWF. Residues 223-232 are Cytoplasmic-facing; that stretch reads WRRWSYQTVL.

Heterodimer with B2M (beta-2-microglobulin). Interacts with saposin C.

It is found in the cell membrane. The protein localises to the endosome membrane. The protein resides in the lysosome membrane. Functionally, antigen-presenting protein that binds self and non-self lipid and glycolipid antigens and presents them to T-cell receptors on natural killer T-cells. This Ovis aries (Sheep) protein is T-cell surface glycoprotein CD1b-3.